We begin with the raw amino-acid sequence, 191 residues long: Stress response regulator protein 1 (191 aa).

One can recognise a Response regulatory domain in the interval 62–181 (SFLLVDDNEI…TNYILQKIEQ (120 aa)). 4-aspartylphosphate is present on Asp114.

Its function is as follows. Required for stress adaptation, morphogenesis and virulence. This is Stress response regulator protein 1 (SRR1) from Clavispora lusitaniae (strain ATCC 42720) (Yeast).